A 342-amino-acid polypeptide reads, in one-letter code: MQFIDQAKIEVEAGKGGDGIVAFRREKYVPTGGPSGGNGGRGGSVFFVADENLQTLLDFRYNHRFQAEKGTRGGPNNCTGAGGKDLIIEVPCGTTIYDAETGELLGDLTEPQQTLLIAQGGKGGLGNQHFLSNRNRAPEYALPGLPGEIKQLRLELKLLAEVGIIGLPNAGKSTLISSLSAARPKIADYPFTTLIPNLGVVRKPTGDGTVFADIPGLIAGASHGAGLGHDFLRHIERTRVLLHLIDATSDDVIRDYNTIKEELQAYGQGLAERPQILALNKIDAVDRETVDLEALATQLNHLSYAPVFIISAVTRTGLEPMLQEIWGILDQMKVPEEVEALR.

An Obg domain is found at 1–159 (MQFIDQAKIE…KQLRLELKLL (159 aa)). The region spanning 160–330 (AEVGIIGLPN…MLQEIWGILD (171 aa)) is the OBG-type G domain. Residues 166 to 173 (GLPNAGKS), 191 to 195 (FTTLI), 213 to 216 (DIPG), 280 to 283 (NKID), and 311 to 313 (SAV) contribute to the GTP site. Positions 173 and 193 each coordinate Mg(2+).

It belongs to the TRAFAC class OBG-HflX-like GTPase superfamily. OBG GTPase family. As to quaternary structure, monomer. Mg(2+) serves as cofactor.

The protein resides in the cytoplasm. An essential GTPase which binds GTP, GDP and possibly (p)ppGpp with moderate affinity, with high nucleotide exchange rates and a fairly low GTP hydrolysis rate. Plays a role in control of the cell cycle, stress response, ribosome biogenesis and in those bacteria that undergo differentiation, in morphogenesis control. In Nostoc punctiforme (strain ATCC 29133 / PCC 73102), this protein is GTPase Obg.